A 147-amino-acid polypeptide reads, in one-letter code: Protein phosphatase 1 regulatory subunit 14B (147 aa).

A compositionally biased stretch (low complexity) spans 1 to 15 (MADSGPAGGAALAAP). Residues 1–55 (MADSGPAGGAALAAPAPGPGSGSTGPRVYFQSPPGAAGEGPGGADDDGPVRRQGK) are disordered. Residue alanine 2 is modified to N-acetylalanine. Phosphoserine is present on serine 21. A Phosphotyrosine modification is found at tyrosine 29. Serine 32 bears the Phosphoserine mark. Threonine 57 bears the Phosphothreonine mark. Positions 61-103 (DRKELRKRLNLEEWILEQLTRLYDCQEEEIPELEIDVDELLDM) form a coiled coil.

This sequence belongs to the PP1 inhibitor family. In terms of processing, phosphorylated primarily on Thr-57 by PKC (in vitro). An unknown Ser is also phosphorylated by PKC (in vitro). In terms of tissue distribution, ubiquitous. Highly expressed in testis. Detected at low levels in the other tissues tested. Highly expressed in cardiac muscle, bladder and aorta (at protein level).

The protein resides in the cytoplasm. Inhibitor of PPP1CA. Has over 50-fold higher inhibitory activity when phosphorylated. This is Protein phosphatase 1 regulatory subunit 14B (Ppp1r14b) from Mus musculus (Mouse).